The primary structure comprises 710 residues: Tudor domain-containing protein 3 (710 aa).

Disordered regions lie at residues 206–227 (KTFG…GSRN), 288–328 (LTGN…SAPS), and 369–515 (KDYN…SEFY). The UBA domain maps to 250–290 (LVDEKALRHITEMGFSKDAARQALMDHSNNVEAALNSLLTG). 2 stretches are compositionally biased toward basic and acidic residues: residues 370–400 (DYNH…RFQK) and 431–451 (MEER…KDFS). Polar residues predominate over residues 453–471 (LPSSHQNEGSYKKSYTNPM). 2 stretches are compositionally biased toward basic and acidic residues: residues 480–490 (NHTEVKEEFHH) and 504–515 (KKDDQRYNSEFY). Residues 617–677 (SWRPGDECLA…RPIQAEAWEE (61 aa)) enclose the Tudor domain. The segment at 678 to 710 (EGDFGDFRRGGDGQPRRSTRPTQQFYQPPRARN) is disordered. The span at 682 to 692 (GDFRRGGDGQP) shows a compositional bias: basic and acidic residues.

Component of mRNA stress granules.

The protein resides in the cytoplasm. It is found in the nucleus. Its function is as follows. Scaffolding protein that specifically recognizes and binds dimethylarginine-containing proteins. Plays a role in the regulation of translation of target mRNAs by binding Arg/Gly-rich motifs (GAR) in dimethylarginine-containing proteins. In nucleus, acts as a coactivator: recognizes and binds asymmetric dimethylation on the core histone tails associated with transcriptional activation (H3R17me2a and H4R3me2a) and recruits proteins at these arginine-methylated loci. In cytoplasm, acts as an antiviral factor that participates in the assembly of stress granules together with G3BP1. The chain is Tudor domain-containing protein 3 (tdrd3) from Xenopus tropicalis (Western clawed frog).